The sequence spans 118 residues: ATP synthase subunit g, mitochondrial (118 aa).

It belongs to the ATPase g subunit family. F-type ATPases have 2 components, CF(1) - the catalytic core - and CF(0) - the membrane proton channel.

It localises to the mitochondrion membrane. Its function is as follows. Mitochondrial membrane ATP synthase (F(1)F(0) ATP synthase or Complex V) produces ATP from ADP in the presence of a proton gradient across the membrane which is generated by electron transport complexes of the respiratory chain. F-type ATPases consist of two structural domains, F(1) - containing the extramembraneous catalytic core, and F(0) - containing the membrane proton channel, linked together by a central stalk and a peripheral stalk. During catalysis, ATP synthesis in the catalytic domain of F(1) is coupled via a rotary mechanism of the central stalk subunits to proton translocation. Part of the complex F(0) domain. Minor subunit located with subunit a in the membrane. This chain is ATP synthase subunit g, mitochondrial (atp20), found in Schizosaccharomyces pombe (strain 972 / ATCC 24843) (Fission yeast).